Here is a 3681-residue protein sequence, read N- to C-terminus: E3 ubiquitin-protein ligase UPL1 (3681 aa).

Over residues 882 to 891 (DEKKSVDRGS) the composition is skewed to basic and acidic residues. The disordered stretch occupies residues 882 to 912 (DEKKSVDRGSDNSVSASSSTAERESDEDSSN). Over residues 892–901 (DNSVSASSST) the composition is skewed to low complexity. The UBA domain occupies 1269-1310 (QLDESIVGMIVEMGFSRSRAEIALRRVGTNSVEMAMDWLFTN). Residues 1316–1335 (QEDDELAQALALSLGNSSET) enclose the UIM domain. Disordered regions lie at residues 1332–1358 (SSET…KEPP), 1768–1802 (MEVD…KAEI), 2015–2094 (EQLK…MRIE), 2125–2151 (ENRA…EDAD), 2253–2287 (RQTG…TASV), 2401–2435 (NTTE…QSEE), 2483–2505 (PLPL…DGAP), 2537–2606 (IAPP…APEV), 2975–3003 (SPSS…DAES), and 3228–3254 (TAGE…KTDG). Basic and acidic residues-rich tracts occupy residues 1336–1345 (PKLEDTEKPV), 1782–1802 (KVGE…KAEI), and 2017–2037 (LKSE…HDSH). Polar residues predominate over residues 2038–2087 (GNSTETEADELNQNNSSLQQVTDAAGNGQEQAQVSSQSAGERGSSQTQAM). The span at 2130 to 2151 (DDVDDDMGDEGEDDEGDDEDAD) shows a compositional bias: acidic residues. Residues 2253-2265 (RQTGRSSLDRSGS) show a composition bias toward basic and acidic residues. The segment covering 2277–2287 (RPSQTGNTASV) has biased composition (polar residues). S2598 is subject to Phosphoserine. Residues 2982–3002 (EKLENKPVGEEASSETRKDAE) show a composition bias toward basic and acidic residues. Residues 3237-3247 (AHGSSSKTSVD) are compositionally biased toward polar residues. The HECT domain occupies 3340-3681 (SPQDLKGRLN…HEASEGFGFA (342 aa)). The active-site Glycyl thioester intermediate is C3648.

It belongs to the UPL family. TOM1/PTR1 subfamily. In terms of tissue distribution, widely expressed. Expressed in root, stem, cauline and rosette leaf, seedling and flower (at protein level).

It carries out the reaction S-ubiquitinyl-[E2 ubiquitin-conjugating enzyme]-L-cysteine + [acceptor protein]-L-lysine = [E2 ubiquitin-conjugating enzyme]-L-cysteine + N(6)-ubiquitinyl-[acceptor protein]-L-lysine.. It participates in protein modification; protein ubiquitination. Its function is as follows. Probable E3 ubiquitin-protein ligase which mediates ubiquitination and subsequent proteasomal degradation of target proteins. This is E3 ubiquitin-protein ligase UPL1 (UPL1) from Arabidopsis thaliana (Mouse-ear cress).